Reading from the N-terminus, the 364-residue chain is Tyrosyl-DNA phosphodiesterase 2 (364 aa).

An N-acetylmethionine modification is found at Met1. Positions 1-10 (MERNSGPEAG) are enriched in low complexity. The tract at residues 1–21 (MERNSGPEAGPEAELEEGEPE) is disordered. Lys23 participates in a covalent cross-link: Glycyl lysine isopeptide (Lys-Gly) (interchain with G-Cter in SUMO2). Residues 68–108 (ESASESRPESLSEPGSCVDLTKEETNDSISSKTSTSEDKSV) are disordered. Residues Thr88 and Thr92 each carry the phosphothreonine; by ACVR1B modification. The residue at position 95 (Ser95) is a Phosphoserine. The segment at 122–126 (NIDGL) is interaction with 5' end of substrate DNA. Residues Asp124 and Glu154 each coordinate Mg(2+). The interaction with 5' end of substrate DNA stretch occupies residues 228-233 (HLESTR). Asp264 functions as the Proton donor/acceptor in the catalytic mechanism. The segment at 266-268 (NLR) is interaction with 5' end of substrate DNA.

This sequence belongs to the CCR4/nocturin family. In terms of assembly, interacts with TRAF2, TRAF3, TRAF5, TRAF6, TNFRSF8/CD30, TNFRSF5/CD40, TNFRSF1B/TNF-R75, ETS1, ETS2, FLI1, SMAD3 and ACVR1B/ALK4. The cofactor is Mg(2+). Mn(2+) serves as cofactor. In terms of processing, ubiquitinated by TRAF6.

It is found in the nucleus. The protein localises to the PML body. It localises to the nucleolus. The protein resides in the cytoplasm. Functionally, DNA repair enzyme that can remove a variety of covalent adducts from DNA through hydrolysis of a 5'-phosphodiester bond, giving rise to DNA with a free 5' phosphate. Catalyzes the hydrolysis of dead-end complexes between DNA and the topoisomerase 2 (TOP2) active site tyrosine residue. The 5'-tyrosyl DNA phosphodiesterase activity can enable the repair of TOP2-induced DNA double-strand breaks/DSBs without the need for nuclease activity, creating a 'clean' DSB with 5'-phosphate termini that are ready for ligation. Thereby, protects the transcription of many genes involved in neurological development and maintenance from the abortive activity of TOP2. Hydrolyzes 5'-phosphoglycolates on protruding 5' ends on DSBs due to DNA damage by radiation and free radicals. Has preference for single-stranded DNA or duplex DNA with a 4 base pair overhang as substrate. Also has 3'-tyrosyl DNA phosphodiesterase activity, but less efficiently and much slower than TDP1. Constitutes the major if not only 5'-tyrosyl-DNA phosphodiesterase in cells. Also acts as an adapter by participating in the specific activation of MAP3K7/TAK1 in response to TGF-beta: associates with components of the TGF-beta receptor-TRAF6-TAK1 signaling module and promotes their ubiquitination dependent complex formation. Involved in non-canonical TGF-beta induced signaling routes. May also act as a negative regulator of ETS1 and may inhibit NF-kappa-B activation. Acts as a regulator of ribosome biogenesis following stress. The chain is Tyrosyl-DNA phosphodiesterase 2 (TDP2) from Bos taurus (Bovine).